We begin with the raw amino-acid sequence, 320 residues long: Phospho-N-acetylmuramoyl-pentapeptide-transferase (320 aa).

A run of 9 helical transmembrane segments spans residues 5–25 (FWAFTRAFIVTVIFMPAVIKF), 51–71 (MGGALFIAAASLSALIGSVAY), 75–95 (IGFVMVLIPILAVVAYAIIGG), 121–141 (LCAVVIMIIMWIMQIPLILNI), 143–163 (FIGVFNLGIFYFIFLWFWLVG), 176–196 (GLLTGTSLIVYLVYTWIALGV), 198–218 (NHIIVIFNASIIGALVGFLLF), 241–261 (IESIVLGIPFSLLWFGLIFVI), and 300–320 (IDALFWIVTAIIGIIGILYMS).

This sequence belongs to the glycosyltransferase 4 family. MraY subfamily. The cofactor is Mg(2+).

The protein localises to the cell membrane. It carries out the reaction UDP-N-acetyl-alpha-D-muramoyl-L-alanyl-gamma-D-glutamyl-L-lysyl-D-alanyl-D-alanine + di-trans,octa-cis-undecaprenyl phosphate = Mur2Ac(oyl-L-Ala-gamma-D-Glu-L-Lys-D-Ala-D-Ala)-di-trans,octa-cis-undecaprenyl diphosphate + UMP. Its pathway is cell wall biogenesis; peptidoglycan biosynthesis. In terms of biological role, catalyzes the initial step of the lipid cycle reactions in the biosynthesis of the cell wall peptidoglycan: transfers peptidoglycan precursor phospho-MurNAc-pentapeptide from UDP-MurNAc-pentapeptide onto the lipid carrier undecaprenyl phosphate, yielding undecaprenyl-pyrophosphoryl-MurNAc-pentapeptide, known as lipid I. In Leuconostoc mesenteroides subsp. mesenteroides (strain ATCC 8293 / DSM 20343 / BCRC 11652 / CCM 1803 / JCM 6124 / NCDO 523 / NBRC 100496 / NCIMB 8023 / NCTC 12954 / NRRL B-1118 / 37Y), this protein is Phospho-N-acetylmuramoyl-pentapeptide-transferase.